The primary structure comprises 206 residues: dITP/XTP pyrophosphatase (206 aa).

Position 7–12 (7–12 (SNNAKK)) interacts with substrate. Residue D72 is the Proton acceptor of the active site. Residue D72 participates in Mg(2+) binding. Residues S73, 155–158 (FGYD), K182, and 187–188 (HR) contribute to the substrate site.

It belongs to the HAM1 NTPase family. Homodimer. Requires Mg(2+) as cofactor.

It catalyses the reaction XTP + H2O = XMP + diphosphate + H(+). It carries out the reaction dITP + H2O = dIMP + diphosphate + H(+). The enzyme catalyses ITP + H2O = IMP + diphosphate + H(+). Its function is as follows. Pyrophosphatase that catalyzes the hydrolysis of nucleoside triphosphates to their monophosphate derivatives, with a high preference for the non-canonical purine nucleotides XTP (xanthosine triphosphate), dITP (deoxyinosine triphosphate) and ITP. Seems to function as a house-cleaning enzyme that removes non-canonical purine nucleotides from the nucleotide pool, thus preventing their incorporation into DNA/RNA and avoiding chromosomal lesions. This Corynebacterium glutamicum (strain R) protein is dITP/XTP pyrophosphatase.